A 414-amino-acid chain; its full sequence is tRNA dimethylallyltransferase (414 aa).

33–40 lines the ATP pocket; the sequence is APTASGKT. Residue 35 to 40 participates in substrate binding; it reads TASGKT. 3 interaction with substrate tRNA regions span residues 58 to 61, 182 to 186, and 266 to 271; these read DSAL, QRITR, and RCVGYR.

Belongs to the IPP transferase family. As to quaternary structure, monomer. Mg(2+) serves as cofactor.

It carries out the reaction adenosine(37) in tRNA + dimethylallyl diphosphate = N(6)-dimethylallyladenosine(37) in tRNA + diphosphate. In terms of biological role, catalyzes the transfer of a dimethylallyl group onto the adenine at position 37 in tRNAs that read codons beginning with uridine, leading to the formation of N6-(dimethylallyl)adenosine (i(6)A). This chain is tRNA dimethylallyltransferase, found in Psychrobacter arcticus (strain DSM 17307 / VKM B-2377 / 273-4).